A 203-amino-acid polypeptide reads, in one-letter code: Large ribosomal subunit protein bL25 (203 aa).

The protein belongs to the bacterial ribosomal protein bL25 family. CTC subfamily. Part of the 50S ribosomal subunit; part of the 5S rRNA/L5/L18/L25 subcomplex. Contacts the 5S rRNA. Binds to the 5S rRNA independently of L5 and L18.

Functionally, this is one of the proteins that binds to the 5S RNA in the ribosome where it forms part of the central protuberance. The chain is Large ribosomal subunit protein bL25 from Wolbachia pipientis wMel.